A 95-amino-acid polypeptide reads, in one-letter code: Large ribosomal subunit protein bL27 (95 aa).

The tract at residues 1-24 is disordered; that stretch reads MAHKKGTGSTRNGRDSNSQRLGVK. A compositionally biased stretch (polar residues) spans 7-20; that stretch reads TGSTRNGRDSNSQR.

Belongs to the bacterial ribosomal protein bL27 family.

In Trichodesmium erythraeum (strain IMS101), this protein is Large ribosomal subunit protein bL27.